The following is a 371-amino-acid chain: Putative glutamate--cysteine ligase 2 (371 aa).

The protein belongs to the glutamate--cysteine ligase type 2 family. YbdK subfamily. In terms of assembly, homodimer.

It carries out the reaction L-cysteine + L-glutamate + ATP = gamma-L-glutamyl-L-cysteine + ADP + phosphate + H(+). Functionally, ATP-dependent carboxylate-amine ligase which exhibits weak glutamate--cysteine ligase activity. In Klebsiella pneumoniae (strain 342), this protein is Putative glutamate--cysteine ligase 2.